The primary structure comprises 297 residues: Tyrosine recombinase XerC (297 aa).

The region spanning 1–84 is the Core-binding (CB) domain; it reads MEEIQVTFLN…TLRTFYEFWM (84 aa). The region spanning 105-286 is the Tyr recombinase domain; sequence YLPQFFYEEE…SNQQLRKVYL (182 aa). Catalysis depends on residues arginine 145, lysine 169, histidine 238, arginine 241, and histidine 264. Residue tyrosine 273 is the O-(3'-phospho-DNA)-tyrosine intermediate of the active site.

This sequence belongs to the 'phage' integrase family. XerC subfamily. Forms a cyclic heterotetrameric complex composed of two molecules of XerC and two molecules of XerD.

It is found in the cytoplasm. Functionally, site-specific tyrosine recombinase, which acts by catalyzing the cutting and rejoining of the recombining DNA molecules. The XerC-XerD complex is essential to convert dimers of the bacterial chromosome into monomers to permit their segregation at cell division. It also contributes to the segregational stability of plasmids. The chain is Tyrosine recombinase XerC from Staphylococcus haemolyticus (strain JCSC1435).